The primary structure comprises 386 residues: Probable pectin lyase E (386 aa).

The signal sequence occupies residues 1–16 (MKTAVLSLFLALQTYA). C77 and C101 are oxidised to a cystine. Residue N124 is glycosylated (N-linked (GlcNAc...) asparagine). Residue R251 is part of the active site. C326 and C334 are joined by a disulfide.

The protein belongs to the polysaccharide lyase 1 family.

It is found in the secreted. The enzyme catalyses Eliminative cleavage of (1-&gt;4)-alpha-D-galacturonan methyl ester to give oligosaccharides with 4-deoxy-6-O-methyl-alpha-D-galact-4-enuronosyl groups at their non-reducing ends.. In terms of biological role, pectinolytic enzymes consist of four classes of enzymes: pectin lyase, polygalacturonase, pectin methylesterase and rhamnogalacturonase. Among pectinolytic enzymes, pectin lyase is the most important in depolymerization of pectin, since it cleaves internal glycosidic bonds of highly methylated pectins. The sequence is that of Probable pectin lyase E (pelE) from Aspergillus fumigatus (strain CBS 144.89 / FGSC A1163 / CEA10) (Neosartorya fumigata).